Consider the following 24-residue polypeptide: Brevinin-1HSa (24 aa).

The cysteines at positions 18 and 24 are disulfide-linked.

Expressed by the skin glands.

It localises to the secreted. Has antibacterial activity against the Gram-positive bacterium S.aureus ATCC 25923 (MIC=3 uM) and the Gram-negative bacterium E.coli ATCC 25726 (MIC=24 uM). This is Brevinin-1HSa from Odorrana hosii (Hose's rock frog).